Here is a 681-residue protein sequence, read N- to C-terminus: Potassium-transporting ATPase ATP-binding subunit (681 aa).

4 helical membrane-spanning segments follow: residues 30 to 50, 59 to 79, 216 to 236, and 255 to 275; these read LLVY…FFGI, LAIA…EAIA, ILLV…LPFT, and IALL…SIGI. Asp-306 acts as the 4-aspartylphosphate intermediate in catalysis. Residues Asp-343, Glu-347, 376–383, and Lys-394 each bind ATP; that span reads FTATTRMS. Positions 517 and 521 each coordinate Mg(2+). 3 helical membrane passes run 587–607, 615–635, and 661–681; these read FAII…LNLM, AILS…PLSL, and LIAP…LGIV.

The protein belongs to the cation transport ATPase (P-type) (TC 3.A.3) family. Type IA subfamily. In terms of assembly, the system is composed of three essential subunits: KdpA, KdpB and KdpC.

The protein resides in the cell membrane. It catalyses the reaction K(+)(out) + ATP + H2O = K(+)(in) + ADP + phosphate + H(+). In terms of biological role, part of the high-affinity ATP-driven potassium transport (or Kdp) system, which catalyzes the hydrolysis of ATP coupled with the electrogenic transport of potassium into the cytoplasm. This subunit is responsible for energy coupling to the transport system and for the release of the potassium ions to the cytoplasm. In Listeria monocytogenes serotype 4b (strain CLIP80459), this protein is Potassium-transporting ATPase ATP-binding subunit.